The primary structure comprises 199 residues: Hematopoietic prostaglandin D synthase (199 aa).

Residues Pro-2–Gly-79 enclose the GST N-terminal domain. Residues Tyr-8, Arg-14, Trp-39, Gly-49–Ile-51, and Gln-63–Ser-64 contribute to the glutathione site. A GST C-terminal domain is found at Thr-81–Leu-199.

It belongs to the GST superfamily. Sigma family. In terms of assembly, homodimer. Requires glutathione as cofactor. Highly expressed in spleen and bone marrow. Lower levels of expression in small intestine, colon, liver, pancreas and skin. Not detected in brain, heart, lung or kidney (at protein level).

It is found in the cytoplasm. The catalysed reaction is prostaglandin H2 = prostaglandin D2. It carries out the reaction RX + glutathione = an S-substituted glutathione + a halide anion + H(+). The enzyme catalyses 2-glyceryl-prostaglandin H2 = 2-glyceryl-prostaglandin D2. Bifunctional enzyme which catalyzes both the conversion of PGH2 to PGD2, a prostaglandin involved in smooth muscle contraction/relaxation and a potent inhibitor of platelet aggregation, and the conjugation of glutathione with a wide range of aryl halides and organic isothiocyanates. Also exhibits low glutathione-peroxidase activity towards cumene hydroperoxide. The sequence is that of Hematopoietic prostaglandin D synthase from Rattus norvegicus (Rat).